Here is a 274-residue protein sequence, read N- to C-terminus: MNRLEKRMSACRKAGRKALIPYITAGDPGPEHTVPLMHALVGAGADVLELGVPFSDPMADGPVIQAACERALAHGTTLRDVFDMVRRFREQDGETPVVLMGYLNPVEYLGPAVFAEEAAAAGVDGVLTVDLPPEEAAPFTQAFAANDLCPIFLVAPTTAGERLEAVCQAARGFVYYVAIKGVTGVAELDVDDIARRVSAVRARTDLPVGVGFGIRDAESAARVGAVADAVIVGSALVNRIAGLTEQPERVPAVLAEALGEMRRALDGLAEEVAS.

Catalysis depends on proton acceptor residues Glu49 and Asp60.

This sequence belongs to the TrpA family. As to quaternary structure, tetramer of two alpha and two beta chains.

It catalyses the reaction (1S,2R)-1-C-(indol-3-yl)glycerol 3-phosphate + L-serine = D-glyceraldehyde 3-phosphate + L-tryptophan + H2O. Its pathway is amino-acid biosynthesis; L-tryptophan biosynthesis; L-tryptophan from chorismate: step 5/5. Its function is as follows. The alpha subunit is responsible for the aldol cleavage of indoleglycerol phosphate to indole and glyceraldehyde 3-phosphate. This is Tryptophan synthase alpha chain from Alkalilimnicola ehrlichii (strain ATCC BAA-1101 / DSM 17681 / MLHE-1).